Here is a 111-residue protein sequence, read N- to C-terminus: Latartoxin-2b (111 aa).

An N-terminal signal peptide occupies residues 1 to 19 (MKVLVIIALCFFILQTALS). Residues 20–43 (EDKYESFESYVEDLKSGNMKGEAR) constitute a propeptide, removed in mature form. The Processing quadruplet motif signature appears at 40-43 (GEAR). 5 cysteine pairs are disulfide-bonded: Cys-45–Cys-62, Cys-52–Cys-73, Cys-61–Cys-87, Cys-75–Cys-85, and Cys-78–Cys-99. Val-110 carries the valine amide modification.

It belongs to the neurotoxin 19 (CSTX) family. 11 (latartoxin) subfamily. In terms of processing, contains 5 disulfide bonds. Cleavage of the propeptide depends on the processing quadruplet motif (XXXR, with at least one of X being E). As to expression, expressed by the venom gland.

It localises to the secreted. Functionally, insect toxin. This Lachesana tarabaevi (Spider) protein is Latartoxin-2b.